The sequence spans 122 residues: Ribosome-binding factor A (122 aa).

This sequence belongs to the RbfA family. In terms of assembly, monomer. Binds 30S ribosomal subunits, but not 50S ribosomal subunits or 70S ribosomes.

It is found in the cytoplasm. One of several proteins that assist in the late maturation steps of the functional core of the 30S ribosomal subunit. Associates with free 30S ribosomal subunits (but not with 30S subunits that are part of 70S ribosomes or polysomes). Required for efficient processing of 16S rRNA. May interact with the 5'-terminal helix region of 16S rRNA. The protein is Ribosome-binding factor A of Polynucleobacter necessarius subsp. necessarius (strain STIR1).